The chain runs to 2877 residues: Desmoplakin (2877 aa).

The tract at residues 1–20 (MSCNGGSHPRINTLGRMTRA) is disordered. The tract at residues 1–591 (MSCNGGSHPR…DYMKTIEDLE (591 aa)) is interaction with PKP1, JUP, PKP2. Positions 1–1063 (MSCNGGSHPR…ANSENCNKNK (1063 aa)) are globular 1. Phosphoserine occurs at positions 22 and 62. Tyrosine 65 carries the post-translational modification Phosphotyrosine. Position 70 is a phosphothreonine (threonine 70). Phosphoserine occurs at positions 174, 175, and 183. 2 Spectrin repeats span residues 185-278 (SGWD…HLRQ) and 279-382 (LQNI…LKEN). The Spectrin 3a repeat unit spans residues 383-453 (AAYFQFFEEA…NLVNKSKKIV (71 aa)). In terms of domain architecture, SH3 spans 465–522 (NKPIILRALCDYKQDQKIVHKGDECILKDNNERSKWYVTGPGGVDMLVPSVGLIIPPP). A Spectrin 3b repeat occupies 523 to 552 (NPLAVDLSCKIEQYYEAILALWNQLYINMK). Spectrin repeat units follow at residues 553 to 634 (SLVS…IQLP), 661 to 776 (VIET…SLCS), and 777 to 890 (VRAL…DLEK). Coiled coils occupy residues 1034–1280 (LKLK…AEEN), 1313–1354 (NARH…YENE), 1395–1443 (TSGY…QKAS), and 1473–1926 (KQSL…KLED). Positions 1064–1952 (FLDQNLQKYQ…QKEIDKLRQR (889 aa)) are central fibrous rod domain. A phosphoserine mark is found at serine 1665, serine 1715, and serine 2031. The globular 2 stretch occupies residues 1953–2877 (PYGSHRETQT…YSFSSSSIGY (925 aa)). Positions 1967–2215 (TVDSSKLVFD…LLLSVQKRSM (249 aa)) are 4.5 X 38 AA tandem repeats (Domain A). Plectin repeat units follow at residues 2016-2052 (QPFL…PEST), 2053-2090 (VMLL…FDDR), 2091-2128 (QQIY…RETG), 2129-2166 (MRLL…RDLY), 2170-2204 (NDPR…PHTG), 2205-2240 (LLLL…PSTV), 2258-2295 (KDFL…PGTA), 2296-2333 (LELL…IEFK), 2334-2371 (EKLL…KGHG), 2372-2409 (IRLL…EELS), 2413-2447 (SDPS…EETG), 2463-2500 (SQKN…YETF), 2514-2551 (TITG…RKFF), 2617-2654 (SDPL…SITG), 2655-2692 (QRLL…QDMA), 2731-2768 (QRFL…GRAA), and 2769-2806 (QRLQ…DITG). Serine 2214, serine 2216, and serine 2232 each carry phosphoserine. Residues 2251–2453 (DEVGERIKDF…EETGLCLLPL (203 aa)) form a 4.5 X 38 AA tandem repeats (Domain B) region. An LRR 15 repeat occupies 2603–2628 (ISSVRNLTIRSSSLSDPLEESSPIAA). The 4.5 X 38 AA tandem repeats (Domain C) stretch occupies residues 2616-2828 (LSDPLEESSP…GLPSPYNMSA (213 aa)). Residues serine 2817 and serine 2822 each carry the phosphoserine modification. The interval 2817–2877 (SKGLPSPYNM…YSFSSSSIGY (61 aa)) is disordered. Tyrosine 2824 carries the post-translational modification Phosphotyrosine. 2 positions are modified to phosphoserine: serine 2827 and serine 2831. Residues 2830-2853 (GSRSGSRSGSRSGSRSGSRSGSRR) form a 6 X 4 AA tandem repeats of G-S-R-[SR] region. Residues 2830-2853 (GSRSGSRSGSRSGSRSGSRSGSRR) show a composition bias toward low complexity. An omega-N-methylarginine mark is found at arginine 2832 and arginine 2853. Serine 2855 carries the phosphoserine modification. Threonine 2859 carries the phosphothreonine modification. Low complexity predominate over residues 2862 to 2877 (SSYSYSYSFSSSSIGY). Residue serine 2874 is modified to Phosphoserine.

It belongs to the plakin or cytolinker family. In terms of assembly, homodimer. Interacts with COL17A1 (via cytoplasmic region). Interacts with DSC2. Interacts with PKP1. Interacts with PKP2. Interacts weakly with TMEM65. Phosphorylation at Ser-2855 increases association with intermediate filament cytokeratin, potentially facilitating interaction between desmosome junctions and intermediate filament architecture. Expressed in cardiomyocytes (at protein level).

The protein localises to the cell junction. Its subcellular location is the desmosome. The protein resides in the cell membrane. It localises to the cytoplasm. Major high molecular weight protein of desmosomes. Regulates profibrotic gene expression in cardiomyocytes via activation of the MAPK14/p38 MAPK signaling cascade and increase in TGFB1 protein abundance. In Rattus norvegicus (Rat), this protein is Desmoplakin.